The following is a 122-amino-acid chain: Urocortin (122 aa).

An N-terminal signal peptide occupies residues 1–25; sequence MRQRGRATLLVALLLLVQLRPESSQ. A propeptide spanning residues 26 to 80 is cleaved from the precursor; the sequence is WSPAAAAANVVQDPNLRWNPGVRNQGGGVRALLLLLAERFPRRAGSEPAGERQRR. Position 120 is a valine amide (V120).

It belongs to the sauvagine/corticotropin-releasing factor/urotensin I family. Interacts with CRHR1 and CRHR2 (via their N-terminal extracellular domain).

It localises to the secreted. In terms of biological role, acts in vitro to stimulate the secretion of adrenocorticotropic hormone (ACTH). Binds with high affinity to CRF receptor types 1, 2-alpha, and 2-beta. Plays a role in the establishment of normal hearing thresholds. Reduces food intake and regulates ghrelin levels in gastric body and plasma. This is Urocortin (Ucn) from Rattus norvegicus (Rat).